The chain runs to 145 residues: Transcription antitermination protein NusB (145 aa).

This sequence belongs to the NusB family.

In terms of biological role, involved in transcription antitermination. Required for transcription of ribosomal RNA (rRNA) genes. Binds specifically to the boxA antiterminator sequence of the ribosomal RNA (rrn) operons. This is Transcription antitermination protein NusB from Geobacter sp. (strain M21).